The chain runs to 223 residues: ATP phosphoribosyltransferase (223 aa).

This sequence belongs to the ATP phosphoribosyltransferase family. Short subfamily. Heteromultimer composed of HisG and HisZ subunits.

It is found in the cytoplasm. It catalyses the reaction 1-(5-phospho-beta-D-ribosyl)-ATP + diphosphate = 5-phospho-alpha-D-ribose 1-diphosphate + ATP. It functions in the pathway amino-acid biosynthesis; L-histidine biosynthesis; L-histidine from 5-phospho-alpha-D-ribose 1-diphosphate: step 1/9. In terms of biological role, catalyzes the condensation of ATP and 5-phosphoribose 1-diphosphate to form N'-(5'-phosphoribosyl)-ATP (PR-ATP). Has a crucial role in the pathway because the rate of histidine biosynthesis seems to be controlled primarily by regulation of HisG enzymatic activity. This chain is ATP phosphoribosyltransferase, found in Halothermothrix orenii (strain H 168 / OCM 544 / DSM 9562).